A 298-amino-acid chain; its full sequence is Protease HtpX homolog (298 aa).

The next 2 membrane-spanning stretches (helical) occupy residues 14–34 (VVLL…AGYL) and 39–59 (YAMG…SMIF). H143 lines the Zn(2+) pocket. Residue E144 is part of the active site. Zn(2+) is bound at residue H147. The next 2 membrane-spanning stretches (helical) occupy residues 158-178 (IAVA…RMLW) and 197-217 (IITL…ASLI). E226 is a Zn(2+) binding site.

The protein belongs to the peptidase M48B family. Zn(2+) is required as a cofactor.

Its subcellular location is the cell membrane. This Streptococcus pyogenes serotype M28 (strain MGAS6180) protein is Protease HtpX homolog.